We begin with the raw amino-acid sequence, 201 residues long: Peptidyl-tRNA hydrolase (201 aa).

Y14 provides a ligand contact to tRNA. Residue H19 is the Proton acceptor of the active site. Y64, N66, and N113 together coordinate tRNA. Residues 178-201 (PGPAMNRFNRKPEPPESGGEVAAK) form a disordered region.

Belongs to the PTH family. Monomer.

It localises to the cytoplasm. It catalyses the reaction an N-acyl-L-alpha-aminoacyl-tRNA + H2O = an N-acyl-L-amino acid + a tRNA + H(+). Hydrolyzes ribosome-free peptidyl-tRNAs (with 1 or more amino acids incorporated), which drop off the ribosome during protein synthesis, or as a result of ribosome stalling. In terms of biological role, catalyzes the release of premature peptidyl moieties from peptidyl-tRNA molecules trapped in stalled 50S ribosomal subunits, and thus maintains levels of free tRNAs and 50S ribosomes. The chain is Peptidyl-tRNA hydrolase from Koribacter versatilis (strain Ellin345).